Here is a 195-residue protein sequence, read N- to C-terminus: Protein Fer3 (195 aa).

Disordered regions lie at residues 1–24 (MQHP…LWGQ) and 56–82 (PLVP…RRRV). Low complexity predominate over residues 63-75 (STNGRANGSSSSS). Residues 86–138 (AQRRAANIRERRRMFNLNEAFDKLRRKVPTFAYEKRLSRIETLRLAITYIGFM) enclose the bHLH domain. The disordered stretch occupies residues 145–175 (TPSNSHKSRSDVYGSMNGHHQAPPPAIHPHH).

Its subcellular location is the nucleus. In terms of biological role, transcription factor that binds to the E-box and functions as inhibitor of transcription. DNA binding requires dimerization with an E protein. Inhibits transcription activation by ASCL1/MASH1 by sequestering E proteins. The chain is Protein Fer3 (fer3) from Drosophila melanogaster (Fruit fly).